The following is a 368-amino-acid chain: Phospho-N-acetylmuramoyl-pentapeptide-transferase (368 aa).

10 helical membrane passes run 2 to 22 (IALIIGILTSLIITLVGTPLL), 51 to 71 (TLGGVVIVLAVVLGWCASALY), 80 to 100 (PTWAAILALFAMVSMGVLGFI), 116 to 136 (VGGKFFGQVVFATIFAVLALI), 166 to 186 (IVAIILFVIWVNFLMAAWTNA), 193 to 213 (LDGLCAGSSMIAFVGYAIIAM), 234 to 254 (PLDLGIIACCAAVACLGFLWY), 256 to 276 (CNPASIFMGDTGSLALGGLFA), 277 to 297 (ALSIITHTEFLAMIIGGLFVV), and 340 to 360 (FWIVELMFVITGLIIFYGNWV).

Belongs to the glycosyltransferase 4 family. MraY subfamily. The cofactor is Mg(2+).

The protein resides in the cell membrane. It carries out the reaction UDP-N-acetyl-alpha-D-muramoyl-L-alanyl-gamma-D-glutamyl-meso-2,6-diaminopimeloyl-D-alanyl-D-alanine + di-trans,octa-cis-undecaprenyl phosphate = di-trans,octa-cis-undecaprenyl diphospho-N-acetyl-alpha-D-muramoyl-L-alanyl-D-glutamyl-meso-2,6-diaminopimeloyl-D-alanyl-D-alanine + UMP. It functions in the pathway cell wall biogenesis; peptidoglycan biosynthesis. Functionally, catalyzes the initial step of the lipid cycle reactions in the biosynthesis of the cell wall peptidoglycan: transfers peptidoglycan precursor phospho-MurNAc-pentapeptide from UDP-MurNAc-pentapeptide onto the lipid carrier undecaprenyl phosphate, yielding undecaprenyl-pyrophosphoryl-MurNAc-pentapeptide, known as lipid I. The chain is Phospho-N-acetylmuramoyl-pentapeptide-transferase from Bifidobacterium animalis subsp. lactis (strain AD011).